The primary structure comprises 171 residues: Serine acetyltransferase (171 aa).

The protein belongs to the transferase hexapeptide repeat family.

Its subcellular location is the cytoplasm. The enzyme catalyses L-serine + acetyl-CoA = O-acetyl-L-serine + CoA. Its pathway is amino-acid biosynthesis; L-cysteine biosynthesis; L-cysteine from L-serine: step 1/2. The protein is Serine acetyltransferase (cysE) of Helicobacter pylori (strain ATCC 700392 / 26695) (Campylobacter pylori).